A 178-amino-acid polypeptide reads, in one-letter code: Large ribosomal subunit protein uL5 (178 aa).

Belongs to the universal ribosomal protein uL5 family. As to quaternary structure, part of the 50S ribosomal subunit; part of the 5S rRNA/L5/L18/L25 subcomplex. Contacts the 5S rRNA and the P site tRNA. Forms a bridge to the 30S subunit in the 70S ribosome.

Its function is as follows. This is one of the proteins that bind and probably mediate the attachment of the 5S RNA into the large ribosomal subunit, where it forms part of the central protuberance. In the 70S ribosome it contacts protein S13 of the 30S subunit (bridge B1b), connecting the 2 subunits; this bridge is implicated in subunit movement. Contacts the P site tRNA; the 5S rRNA and some of its associated proteins might help stabilize positioning of ribosome-bound tRNAs. In Prochlorococcus marinus subsp. pastoris (strain CCMP1986 / NIES-2087 / MED4), this protein is Large ribosomal subunit protein uL5.